The sequence spans 298 residues: Elongation factor Ts (298 aa).

The tract at residues 79–82 (TDFV) is involved in Mg(2+) ion dislocation from EF-Tu.

This sequence belongs to the EF-Ts family.

The protein localises to the cytoplasm. Associates with the EF-Tu.GDP complex and induces the exchange of GDP to GTP. It remains bound to the aminoacyl-tRNA.EF-Tu.GTP complex up to the GTP hydrolysis stage on the ribosome. The protein is Elongation factor Ts (tsf) of Mycoplasma genitalium (strain ATCC 33530 / DSM 19775 / NCTC 10195 / G37) (Mycoplasmoides genitalium).